The primary structure comprises 946 residues: DNA primase (946 aa).

The tract at residues 596–626 is disordered; it reads RDTEEDEDGKENKNNVPDNGVFQKTTSSVDT. Over residues 617-626 the composition is skewed to polar residues; the sequence is FQKTTSSVDT. Residues 881-920 form a CHC2-type zinc finger; the sequence is CLNYTHRNPQETVQVFIDLRTEHSYALWASLWSRCFTKKC.

This sequence belongs to the herpesviridae DNA primase family. In terms of assembly, associates with the helicase and the primase-associated factor to form the helicase-primase factor. Interacts with host SNAPIN.

The protein resides in the host nucleus. Essential component of the helicase/primase complex. Unwinds the DNA at the replication forks and generates single-stranded DNA for both leading and lagging strand synthesis. The primase initiates primer synthesis and thereby produces large amount of short RNA primers on the lagging strand that the polymerase elongates using dNTPs. In Homo sapiens (Human), this protein is DNA primase (UL70).